The following is a 485-amino-acid chain: Protein nucleotidyltransferase YdiU (485 aa).

ATP-binding residues include G90, G92, R93, K113, D125, G126, R176, and R183. Catalysis depends on D252, which acts as the Proton acceptor. Positions 253 and 262 each coordinate Mg(2+). D262 provides a ligand contact to ATP.

This sequence belongs to the SELO family. The cofactor is Mg(2+). Mn(2+) is required as a cofactor.

The enzyme catalyses L-seryl-[protein] + ATP = 3-O-(5'-adenylyl)-L-seryl-[protein] + diphosphate. The catalysed reaction is L-threonyl-[protein] + ATP = 3-O-(5'-adenylyl)-L-threonyl-[protein] + diphosphate. It carries out the reaction L-tyrosyl-[protein] + ATP = O-(5'-adenylyl)-L-tyrosyl-[protein] + diphosphate. It catalyses the reaction L-histidyl-[protein] + UTP = N(tele)-(5'-uridylyl)-L-histidyl-[protein] + diphosphate. The enzyme catalyses L-seryl-[protein] + UTP = O-(5'-uridylyl)-L-seryl-[protein] + diphosphate. The catalysed reaction is L-tyrosyl-[protein] + UTP = O-(5'-uridylyl)-L-tyrosyl-[protein] + diphosphate. Functionally, nucleotidyltransferase involved in the post-translational modification of proteins. It can catalyze the addition of adenosine monophosphate (AMP) or uridine monophosphate (UMP) to a protein, resulting in modifications known as AMPylation and UMPylation. The protein is Protein nucleotidyltransferase YdiU of Vibrio atlanticus (strain LGP32) (Vibrio splendidus (strain Mel32)).